The primary structure comprises 646 residues: Alkyl/aryl-sulfatase BDS1 (646 aa).

Methionine 1 carries the N-acetylmethionine modification. Zn(2+) is bound by residues histidine 162, histidine 164, aspartate 166, histidine 167, glutamate 273, glutamate 292, and histidine 337.

It belongs to the metallo-beta-lactamase superfamily. Type III sulfatase family. Zn(2+) serves as cofactor.

In terms of biological role, alkyl/aryl-sulfatase. Enables the use of SDS and 4-nitrocatechol as sulfur source. This Saccharomyces cerevisiae (strain ATCC 204508 / S288c) (Baker's yeast) protein is Alkyl/aryl-sulfatase BDS1 (BDS1).